A 418-amino-acid polypeptide reads, in one-letter code: Tyrosine--tRNA ligase (418 aa).

Tyr34 serves as a coordination point for L-tyrosine. The 'HIGH' region signature appears at 39–48; the sequence is PTADSLHLGH. L-tyrosine-binding residues include Tyr169 and Gln173. Positions 229–233 match the 'KMSKS' region motif; sequence KFGKS. Lys232 contributes to the ATP binding site. Residues 352 to 418 form the S4 RNA-binding domain; sequence LNLVDMLVTA…GKKKYAVLTY (67 aa).

The protein belongs to the class-I aminoacyl-tRNA synthetase family. TyrS type 1 subfamily. Homodimer.

The protein resides in the cytoplasm. The enzyme catalyses tRNA(Tyr) + L-tyrosine + ATP = L-tyrosyl-tRNA(Tyr) + AMP + diphosphate + H(+). In terms of biological role, catalyzes the attachment of tyrosine to tRNA(Tyr) in a two-step reaction: tyrosine is first activated by ATP to form Tyr-AMP and then transferred to the acceptor end of tRNA(Tyr). This is Tyrosine--tRNA ligase from Streptococcus pyogenes serotype M12 (strain MGAS2096).